Reading from the N-terminus, the 311-residue chain is Ribonuclease HIII (311 aa).

Residues 93-310 (LSAIGSDEVG…TKKALDIAKH (218 aa)) enclose the RNase H type-2 domain. 3 residues coordinate a divalent metal cation: aspartate 99, glutamate 100, and aspartate 204.

Belongs to the RNase HII family. RnhC subfamily. It depends on Mn(2+) as a cofactor. Mg(2+) is required as a cofactor.

It is found in the cytoplasm. It carries out the reaction Endonucleolytic cleavage to 5'-phosphomonoester.. In terms of biological role, endonuclease that specifically degrades the RNA of RNA-DNA hybrids. In Geobacillus kaustophilus (strain HTA426), this protein is Ribonuclease HIII.